Consider the following 27-residue polypeptide: Phospholipase A2 2 (27 aa).

The segment at 1-27 is disordered; it reads FMKVIDPGTKWCGPGNKAADDTDNGKN. 3 residues coordinate Ca(2+): tryptophan 11, glycine 13, and glycine 15. The span at 18-27 shows a compositional bias: basic and acidic residues; sequence AADDTDNGKN.

This sequence belongs to the phospholipase A2 family. The cofactor is Ca(2+). In terms of tissue distribution, expressed by the venom gland.

It is found in the secreted. It catalyses the reaction a 1,2-diacyl-sn-glycero-3-phosphocholine + H2O = a 1-acyl-sn-glycero-3-phosphocholine + a fatty acid + H(+). Functionally, PLA2 catalyzes the calcium-dependent hydrolysis of the 2-acyl groups in 3-sn-phosphoglycerides. This chain is Phospholipase A2 2, found in Opisthacanthus cayaporum (South American scorpion).